A 487-amino-acid polypeptide reads, in one-letter code: Neuronal immunoglobulin domain-containing protein rig-3 (487 aa).

The first 23 residues, 1–23 (MGRLLAKMLFPLAMCLFVSAVSA), serve as a signal peptide directing secretion. Ig-like domains lie at 34–139 (PIVI…KTIK) and 247–354 (PEFE…PKVT). 2 disulfides stabilise this stretch: cysteine 61–cysteine 124 and cysteine 271–cysteine 327. Residue aspartate 466 is the site of GPI-anchor amidated aspartate attachment. Residues 467 to 487 (SASDSKFPLALATLFFVCLFI) constitute a propeptide, removed in mature form.

As to expression, expressed in the cholinergic motor neurons AS, VA and DA in the ventral nerve cord and in the mechanosensory ALM neurons in the midbody.

The protein localises to the cell projection. It is found in the axon. It localises to the synapse. Its subcellular location is the cell membrane. Cell surface protein which plays a role in the plasticity of cholinergic synapses at neuromuscular junctions and in the polarity of the mechanosensory neuron ALM, possibly by antagonizing Wnt signaling. In Caenorhabditis elegans, this protein is Neuronal immunoglobulin domain-containing protein rig-3.